We begin with the raw amino-acid sequence, 208 residues long: Inactive ribonuclease-like protein 10 (208 aa).

An N-terminal signal peptide occupies residues 1 to 24; it reads MKVTLVHLLFMMLLLLLGLGLGLG. 2 N-linked (GlcNAc...) asparagine glycosylation sites follow: asparagine 125 and asparagine 147.

Belongs to the pancreatic ribonuclease family. The N-terminus is blocked. Glycosylated. Male-specific expression in proximal caput of the epididymis (at protein level).

It is found in the secreted. Functionally, secreted proximal epididymal protein required for post-testicular sperm maturation and male fertility. May be involved in sperm adhesion to the egg zona pellucida. Does not have ribonuclease activity. The protein is Inactive ribonuclease-like protein 10 (Rnase10) of Mus musculus (Mouse).